The sequence spans 161 residues: Xanthine-guanine phosphoribosyltransferase (161 aa).

Residues 41–42 (RG) and 95–103 (DDLVDTGNT) contribute to the 5-phospho-alpha-D-ribose 1-diphosphate site. Asp-96 is a binding site for Mg(2+). Guanine contacts are provided by Asp-99 and Ile-142. Xanthine contacts are provided by Asp-99 and Ile-142. Residues 99–103 (DTGNT) and 141–142 (WI) contribute to the GMP site.

This sequence belongs to the purine/pyrimidine phosphoribosyltransferase family. XGPT subfamily. Homotetramer. Mg(2+) serves as cofactor.

It localises to the cell inner membrane. The catalysed reaction is GMP + diphosphate = guanine + 5-phospho-alpha-D-ribose 1-diphosphate. It carries out the reaction XMP + diphosphate = xanthine + 5-phospho-alpha-D-ribose 1-diphosphate. The enzyme catalyses IMP + diphosphate = hypoxanthine + 5-phospho-alpha-D-ribose 1-diphosphate. The protein operates within purine metabolism; GMP biosynthesis via salvage pathway; GMP from guanine: step 1/1. Its pathway is purine metabolism; XMP biosynthesis via salvage pathway; XMP from xanthine: step 1/1. Purine salvage pathway enzyme that catalyzes the transfer of the ribosyl-5-phosphate group from 5-phospho-alpha-D-ribose 1-diphosphate (PRPP) to the N9 position of the 6-oxopurines guanine and xanthine to form the corresponding ribonucleotides GMP (guanosine 5'-monophosphate) and XMP (xanthosine 5'-monophosphate), with the release of PPi. To a lesser extent, also acts on hypoxanthine. This is Xanthine-guanine phosphoribosyltransferase from Idiomarina loihiensis (strain ATCC BAA-735 / DSM 15497 / L2-TR).